A 377-amino-acid chain; its full sequence is 5-hydroxytryptamine receptor 1D (377 aa).

Asparagine 5, asparagine 17, and asparagine 21 each carry an N-linked (GlcNAc...) asparagine glycan. Helical transmembrane passes span 39 to 64 (ISLA…TTIF), 76 to 97 (LIGS…ISIA), and 110 to 134 (LCDI…VIAL). Cysteines 111 and 188 form a disulfide. Serotonin-binding residues include aspartate 118 and cysteine 122. Positions 135–137 (DRY) match the DRY motif; important for ligand-induced conformation changes motif. The next 4 membrane-spanning stretches (helical) occupy residues 155–176 (AAVM…PLFW), 195–218 (ISYT…ILYG), 301–326 (KTLG…VLPI), and 336–359 (ALFD…YTVF). Serine 321 contacts serotonin. The short motif at 352–356 (NPIIY) is the NPxxY motif; important for ligand-induced conformation changes and signaling element.

Belongs to the G-protein coupled receptor 1 family. As to quaternary structure, homodimer. Heterodimer with HTR1B.

It localises to the cell membrane. In terms of biological role, G-protein coupled receptor for 5-hydroxytryptamine (serotonin). Also functions as a receptor for ergot alkaloid derivatives, various anxiolytic and antidepressant drugs and other psychoactive substances. Ligand binding causes a conformation change that triggers signaling via guanine nucleotide-binding proteins (G proteins) and modulates the activity of downstream effectors, such as adenylate cyclase. HTR1D is coupled to G(i)/G(o) G alpha proteins and mediates inhibitory neurotransmission by inhibiting adenylate cyclase activity. Regulates the release of 5-hydroxytryptamine in the brain, and thereby affects neural activity. May also play a role in regulating the release of other neurotransmitters. May play a role in vasoconstriction. In Canis lupus familiaris (Dog), this protein is 5-hydroxytryptamine receptor 1D (HTR1D).